Consider the following 565-residue polypeptide: Polycomb protein EED (565 aa).

WD repeat units follow at residues Asp89–Thr133, Gly136–Pro176, Gly185–Met224, and Ile240–Pro278. Residues Val417–Phe488 form a disordered region. Positions Gly429–Asn450 are enriched in low complexity. Residues His451–Ser468 are compositionally biased toward polar residues. A WD 5 repeat occupies Ile519 to Gly559.

Belongs to the WD repeat ESC family. In terms of assembly, component of the polycomb repressive complex 2 (PRC2) that consists of four core subunits icluding EZH2, EED, SUZ12, and RBBP4, among which EZH2 is the catalytic subunit and which minimally requires EED and SUZ12 for catalysis.

The protein localises to the nucleus. In terms of biological role, component of the of the Polycomb Repressive Complex 2 (PRC2), a histone H3 lysine methyltransferase responsible for generating mono-, di-, and tri-methylation on Lys27 (H3K27me1, H3K27me2 and H3K27me3). The tri-methylated form is known to be critical in gene repression, and its proper placement is essential in defining repression patterns during development. EED is not a catalytic subunit but is required for the complex regulation of histone H3 lysine methylation by EZH2. This chain is Polycomb protein EED, found in Chaetomium thermophilum (strain DSM 1495 / CBS 144.50 / IMI 039719) (Thermochaetoides thermophila).